A 342-amino-acid chain; its full sequence is UDP-3-O-acylglucosamine N-acyltransferase (342 aa).

Histidine 253 acts as the Proton acceptor in catalysis.

This sequence belongs to the transferase hexapeptide repeat family. LpxD subfamily. Homotrimer.

The enzyme catalyses a UDP-3-O-[(3R)-3-hydroxyacyl]-alpha-D-glucosamine + a (3R)-hydroxyacyl-[ACP] = a UDP-2-N,3-O-bis[(3R)-3-hydroxyacyl]-alpha-D-glucosamine + holo-[ACP] + H(+). It functions in the pathway bacterial outer membrane biogenesis; LPS lipid A biosynthesis. Its function is as follows. Catalyzes the N-acylation of UDP-3-O-acylglucosamine using 3-hydroxyacyl-ACP as the acyl donor. Is involved in the biosynthesis of lipid A, a phosphorylated glycolipid that anchors the lipopolysaccharide to the outer membrane of the cell. This is UDP-3-O-acylglucosamine N-acyltransferase from Rickettsia bellii (strain RML369-C).